A 151-amino-acid polypeptide reads, in one-letter code: Mediator of RNA polymerase II transcription subunit 32 (151 aa).

Residues 128-151 (GVAPGSVHSSSTGFDSRFSEDSTQ) form a disordered region.

It belongs to the mediator complex subunit 32 family. Oligomers. Component of the Mediator complex. Interacts with MED6. Interacts with GEBPL.

The protein localises to the nucleus. In terms of biological role, component of the Mediator complex, a coactivator involved in the regulated transcription of nearly all RNA polymerase II-dependent genes. Mediator functions as a bridge to convey information from gene-specific regulatory proteins to the basal RNA polymerase II transcription machinery. The Mediator complex, having a compact conformation in its free form, is recruited to promoters by direct interactions with regulatory proteins and serves for the assembly of a functional pre-initiation complex with RNA polymerase II and the general transcription factors. The chain is Mediator of RNA polymerase II transcription subunit 32 (MED32) from Arabidopsis thaliana (Mouse-ear cress).